Reading from the N-terminus, the 306-residue chain is Agmatinase (306 aa).

Mn(2+)-binding residues include H126, D149, H151, D153, D230, and D232.

The protein belongs to the arginase family. Agmatinase subfamily. It depends on Mn(2+) as a cofactor.

The enzyme catalyses agmatine + H2O = urea + putrescine. It participates in amine and polyamine biosynthesis; putrescine biosynthesis via agmatine pathway; putrescine from agmatine: step 1/1. Its function is as follows. Catalyzes the formation of putrescine from agmatine. This chain is Agmatinase, found in Salmonella dublin (strain CT_02021853).